The primary structure comprises 2877 residues: Desmoplakin (2877 aa).

A disordered region spans residues 1–20 (MSCNGGSHPRINTLGRMTRA). The interval 1-591 (MSCNGGSHPR…DYMKTIEDLE (591 aa)) is interaction with PKP1, JUP, PKP2. The segment at 1–1063 (MSCNGGSHPR…ANSENCNKNK (1063 aa)) is globular 1. Ser-22 and Ser-62 each carry phosphoserine. Tyr-65 carries the phosphotyrosine modification. Thr-70 is subject to Phosphothreonine. Ser-174, Ser-175, and Ser-183 each carry phosphoserine. Spectrin repeat units lie at residues 185 to 278 (SGWD…HLRQ) and 279 to 382 (LQNI…LKEN). A Spectrin 3a repeat occupies 383–453 (AAYFQFFEEA…NLVNKSKKIV (71 aa)). The 58-residue stretch at 465–522 (NKPIILRALCDYKQDQKIVHKGDECILKDNNERSKWYVTGPGGVDMLVPSVGLIIPPP) folds into the SH3 domain. The stretch at 523–552 (NPLAVDLSCKIEQYYEAILALWNQLYINMK) is one Spectrin 3b repeat. Spectrin repeat units follow at residues 553 to 634 (SLVS…IQLP), 661 to 776 (VIET…SLCS), and 777 to 890 (VRAL…DLEK). 4 coiled-coil regions span residues 1034-1280 (LKLK…AEEN), 1313-1354 (NARH…YENE), 1395-1443 (TSGY…QKAS), and 1473-1926 (KQSL…KLED). Residues 1064–1952 (FLDQNLQKYQ…QKEIDKLRQR (889 aa)) form a central fibrous rod domain region. 3 positions are modified to phosphoserine: Ser-1665, Ser-1715, and Ser-2031. Residues 1953-2877 (PYGSHRETQT…YSFSSSSIGY (925 aa)) are globular 2. The tract at residues 1967–2215 (TVDSSKLVFD…LLLSVQKRSM (249 aa)) is 4.5 X 38 AA tandem repeats (Domain A). 17 Plectin repeats span residues 2016–2052 (QPFL…PEST), 2053–2090 (VMLL…FDDR), 2091–2128 (QQIY…RETG), 2129–2166 (MRLL…RDLY), 2170–2204 (NDPR…PHTG), 2205–2240 (LLLL…PSTV), 2258–2295 (KDFL…PGTA), 2296–2333 (LELL…IEFK), 2334–2371 (EKLL…KGHG), 2372–2409 (IRLL…EELS), 2413–2447 (SDPS…EETG), 2463–2500 (SQKN…YETF), 2514–2551 (TITG…RKFF), 2617–2654 (SDPL…SITG), 2655–2692 (QRLL…QDMA), 2731–2768 (QRFL…GRAA), and 2769–2806 (QRLQ…DITG). Phosphoserine is present on residues Ser-2214, Ser-2216, and Ser-2232. The interval 2251–2453 (DEVGERIKDF…EETGLCLLPL (203 aa)) is 4.5 X 38 AA tandem repeats (Domain B). Residues 2603 to 2628 (ISSVRNLTIRSSSLSDPLEESSPIAA) form an LRR 15 repeat. The 4.5 X 38 AA tandem repeats (Domain C) stretch occupies residues 2616–2828 (LSDPLEESSP…GLPSPYNMSA (213 aa)). Ser-2817 and Ser-2822 each carry phosphoserine. The interval 2817 to 2877 (SKGLPSPYNM…YSFSSSSIGY (61 aa)) is disordered. Phosphotyrosine is present on Tyr-2824. A phosphoserine mark is found at Ser-2827 and Ser-2831. Residues 2830–2853 (GSRSGSRSGSRSGSRSGSRSGSRR) are 6 X 4 AA tandem repeats of G-S-R-[SR]. A compositionally biased stretch (low complexity) spans 2830 to 2853 (GSRSGSRSGSRSGSRSGSRSGSRR). 2 positions are modified to omega-N-methylarginine: Arg-2832 and Arg-2853. The residue at position 2855 (Ser-2855) is a Phosphoserine. A Phosphothreonine modification is found at Thr-2859. Residues 2862–2877 (SSYSYSYSFSSSSIGY) are compositionally biased toward low complexity. Ser-2874 carries the phosphoserine modification.

Belongs to the plakin or cytolinker family. In terms of assembly, homodimer. Interacts with COL17A1 (via cytoplasmic region). Interacts with DSC2. Interacts with PKP1. Interacts with PKP2. Interacts weakly with TMEM65. In terms of processing, phosphorylation at Ser-2855 increases association with intermediate filament cytokeratin, potentially facilitating interaction between desmosome junctions and intermediate filament architecture. Expressed in cardiomyocytes (at protein level).

The protein localises to the cell junction. Its subcellular location is the desmosome. It is found in the cell membrane. The protein resides in the cytoplasm. Functionally, major high molecular weight protein of desmosomes. Regulates profibrotic gene expression in cardiomyocytes via activation of the MAPK14/p38 MAPK signaling cascade and increase in TGFB1 protein abundance. The protein is Desmoplakin of Rattus norvegicus (Rat).